A 372-amino-acid polypeptide reads, in one-letter code: Putative glutamate--cysteine ligase 2 (372 aa).

Belongs to the glutamate--cysteine ligase type 2 family. YbdK subfamily.

The enzyme catalyses L-cysteine + L-glutamate + ATP = gamma-L-glutamyl-L-cysteine + ADP + phosphate + H(+). In terms of biological role, ATP-dependent carboxylate-amine ligase which exhibits weak glutamate--cysteine ligase activity. The polypeptide is Putative glutamate--cysteine ligase 2 (Rhodopirellula baltica (strain DSM 10527 / NCIMB 13988 / SH1)).